A 544-amino-acid chain; its full sequence is Dihydrolipoyllysine-residue acetyltransferase component of pyruvate dehydrogenase complex (544 aa).

2 Lipoyl-binding domains span residues 1–76 and 113–188; these read MYEF…VTID and IYDF…VLIG. N6-lipoyllysine is present on residues lysine 42 and lysine 154. Residues 242 to 279 form the Peripheral subunit-binding (PSBD) domain; the sequence is LASPVARKLASDLGVDIATIKGSGEQGRVMKDDVQNSK. Histidine 516 is a catalytic residue.

It belongs to the 2-oxoacid dehydrogenase family. In terms of assembly, forms a 24-polypeptide structural core with octahedral symmetry. It depends on (R)-lipoate as a cofactor.

The catalysed reaction is N(6)-[(R)-dihydrolipoyl]-L-lysyl-[protein] + acetyl-CoA = N(6)-[(R)-S(8)-acetyldihydrolipoyl]-L-lysyl-[protein] + CoA. In terms of biological role, the pyruvate dehydrogenase complex catalyzes the overall conversion of pyruvate to acetyl-CoA and CO(2). It contains multiple copies of three enzymatic components: pyruvate dehydrogenase (E1), dihydrolipoamide acetyltransferase (E2) and lipoamide dehydrogenase (E3). The chain is Dihydrolipoyllysine-residue acetyltransferase component of pyruvate dehydrogenase complex (pdhC) from Acholeplasma laidlawii.